Here is a 797-residue protein sequence, read N- to C-terminus: Protein tamozhennic (797 aa).

The region spanning 79–146 (QNAIVAFETI…AAEDTFVLEG (68 aa)) is the PUB domain. Disordered stretches follow at residues 515–570 (AGGI…ISDL) and 638–697 (LSIT…SAGV). Basic and acidic residues predominate over residues 662 to 679 (EKARTLDKKSGTGRREAK). The segment at 735–766 (IVTSPNEWSCSFCTFLNPDTKRICEMCCRSKD) adopts a RanBP2-type zinc-finger fold.

Homomultimer. Binds to dl and msl-1 via their nuclear localization signal (NLS). Also binds to Ran, Ran-like and mbo.

It localises to the cytoplasm. Functionally, has an essential role during oogenesis and embryogenesis, perhaps in modulating the levels of nuclear import of additional proteins. Modulates the nuclear import of dorsal (dl), Dif and male specific lethal 1 (msl-1). Negatively regulates nuclear import of dl and controls the accumulation of dl in the nucleus after immune challenge. The protein is Protein tamozhennic (tamo) of Drosophila melanogaster (Fruit fly).